The chain runs to 525 residues: Protein-serine O-palmitoleoyltransferase porcupine (525 aa).

Helical transmembrane passes span 83–103 (VMQYVAPMLLLCLLCRLLCLL), 125–145 (LIILQITVGYRLLLLLLLAAV), 159–179 (GAQVLAVLTVGSQFLYELLIW), 220–240 (FAYLGYIYSPATCALGPWVSF), 260–280 (LLPNVVICVLAVTVSNCVAPA), 301–318 (VRSSHYFVGMMAQALLVA), 395–415 (SLLHGMDLRIYLVLISLAFLA), 467–487 (NLAFTALAIFHLAYLGVVLLG), and 505–525 (QAGYLSHYIGLGTFVLYLFIS). Residue His398 is part of the active site.

Belongs to the membrane-bound acyltransferase family. Porcupine subfamily. As to quaternary structure, interacts with wg and Wnt5.

It is found in the endoplasmic reticulum membrane. The catalysed reaction is [Wnt protein]-L-serine + (9Z)-hexadecenoyl-CoA = [Wnt protein]-O-(9Z)-hexadecenoyl-L-serine + CoA. In terms of biological role, protein-serine O-palmitoleoyltransferase that acts as a key regulator of the Wnt signaling pathway by mediating the attachment of palmitoleate, a 16-carbon monounsaturated fatty acid (C16:1(9Z)), to Wnt proteins. Serine palmitoleoylation of Wnt proteins is required for efficient binding to frizzled receptors. Also facilitates the glycosylation of Wnt family members, including wg and Wnt5. The cotranslational disulfide bond formation of wg competes with the N-glycosylation. Porc stimulates the post-translational N-glycosylation by anchoring wg at the ER membrane, probably through acylation. The sequence is that of Protein-serine O-palmitoleoyltransferase porcupine from Drosophila melanogaster (Fruit fly).